The chain runs to 267 residues: Luciferase (267 aa).

Residue Asn-4 is glycosylated (N-linked (GlcNAc...) asparagine). The chain crosses the membrane as a helical span at residues 17 to 39 (LSSRSIAITCGVVLASAIAFPII).

This sequence belongs to the fungal luciferase family.

It localises to the membrane. The enzyme catalyses 3-hydroxyhispidin + O2 = (E)-caffeoylpyruvate + hnu + CO2. It carries out the reaction 3-hydroxyhispidin + O2 = 4-[(E)-2-(3,4-dihydroxyphenyl)ethenyl]-1,7-dihydroxy-2,3,5-trioxabicyclo[2.2.2]oct-7-en-6-one. Its function is as follows. Luciferase; part of the gene cluster that mediates the fungal bioluminescence cycle. Uses the fungal luciferin 3-hydroxyhispidin as a substrate to produce an endoperoxide as a high-energy intermediate with decomposition that yields oxyluciferin (also known as caffeoylpyruvate) and light emission. The fungal bioluminescence cycle begins with the hispidin synthetase that catalyzes the formation of hispidin which is further hydroxylated by the hispidin-3-hydroxylase, yielding the fungal luciferin 3-hydroxyhispidin. The luciferase then produces an endoperoxide as a high-energy intermediate with decomposition that yields oxyluciferin and light emission. Oxyluciferin can be recycled to caffeic acid by caffeoylpyruvate hydrolase. The sequence is that of Luciferase from Neonothopanus nambi (Agaricus nambi).